Consider the following 227-residue polypeptide: UPF0758 protein lpg2489 (227 aa).

An MPN domain is found at 102–225 (RLSNTQQTYA…YSIFAENKWV (124 aa)). Zn(2+) contacts are provided by His-173, His-175, and Asp-186. Positions 173–186 (HNHPSGLSDASQQD) match the JAMM motif motif.

Belongs to the UPF0758 family.

The chain is UPF0758 protein lpg2489 from Legionella pneumophila subsp. pneumophila (strain Philadelphia 1 / ATCC 33152 / DSM 7513).